Here is a 203-residue protein sequence, read N- to C-terminus: Outer-membrane lipoprotein carrier protein (203 aa).

An N-terminal signal peptide occupies residues 1 to 21; that stretch reads MKKLIISCCLLATFSAAGAWA. The tract at residues 174 to 203 is disordered; sequence ALKSQQSGPISADKFKFRPPKGVTVDDQRQ.

It belongs to the LolA family. As to quaternary structure, monomer.

Its subcellular location is the periplasm. Its function is as follows. Participates in the translocation of lipoproteins from the inner membrane to the outer membrane. Only forms a complex with a lipoprotein if the residue after the N-terminal Cys is not an aspartate (The Asp acts as a targeting signal to indicate that the lipoprotein should stay in the inner membrane). The sequence is that of Outer-membrane lipoprotein carrier protein from Erwinia tasmaniensis (strain DSM 17950 / CFBP 7177 / CIP 109463 / NCPPB 4357 / Et1/99).